The primary structure comprises 449 residues: Bifunctional protein GlmU (449 aa).

The segment at 1–226 (MVAVAILAAG…FQEISGINDR (226 aa)) is pyrophosphorylase. Residues 7–10 (LAAG), Lys-21, Gln-73, and 78–79 (GT) contribute to the UDP-N-acetyl-alpha-D-glucosamine site. Asp-103 is a binding site for Mg(2+). 4 residues coordinate UDP-N-acetyl-alpha-D-glucosamine: Gly-140, Glu-155, Asn-170, and Asn-224. Asn-224 serves as a coordination point for Mg(2+). The tract at residues 227-247 (FQLSAAYEILQDRIKEKWMKA) is linker. The interval 248-449 (GVMIHQPDTV…KEIKGWRLQS (202 aa)) is N-acetyltransferase. Positions 329 and 347 each coordinate UDP-N-acetyl-alpha-D-glucosamine. Residue His-359 is the Proton acceptor of the active site. 2 residues coordinate UDP-N-acetyl-alpha-D-glucosamine: Tyr-362 and Asn-373. Residues Ala-376, 382–383 (NY), Ala-419, and Arg-436 each bind acetyl-CoA.

The protein in the N-terminal section; belongs to the N-acetylglucosamine-1-phosphate uridyltransferase family. This sequence in the C-terminal section; belongs to the transferase hexapeptide repeat family. As to quaternary structure, homotrimer. Mg(2+) serves as cofactor.

It localises to the cytoplasm. The catalysed reaction is alpha-D-glucosamine 1-phosphate + acetyl-CoA = N-acetyl-alpha-D-glucosamine 1-phosphate + CoA + H(+). It catalyses the reaction N-acetyl-alpha-D-glucosamine 1-phosphate + UTP + H(+) = UDP-N-acetyl-alpha-D-glucosamine + diphosphate. It participates in nucleotide-sugar biosynthesis; UDP-N-acetyl-alpha-D-glucosamine biosynthesis; N-acetyl-alpha-D-glucosamine 1-phosphate from alpha-D-glucosamine 6-phosphate (route II): step 2/2. It functions in the pathway nucleotide-sugar biosynthesis; UDP-N-acetyl-alpha-D-glucosamine biosynthesis; UDP-N-acetyl-alpha-D-glucosamine from N-acetyl-alpha-D-glucosamine 1-phosphate: step 1/1. Its pathway is bacterial outer membrane biogenesis; LPS lipid A biosynthesis. Its function is as follows. Catalyzes the last two sequential reactions in the de novo biosynthetic pathway for UDP-N-acetylglucosamine (UDP-GlcNAc). The C-terminal domain catalyzes the transfer of acetyl group from acetyl coenzyme A to glucosamine-1-phosphate (GlcN-1-P) to produce N-acetylglucosamine-1-phosphate (GlcNAc-1-P), which is converted into UDP-GlcNAc by the transfer of uridine 5-monophosphate (from uridine 5-triphosphate), a reaction catalyzed by the N-terminal domain. This chain is Bifunctional protein GlmU, found in Picosynechococcus sp. (strain ATCC 27264 / PCC 7002 / PR-6) (Agmenellum quadruplicatum).